A 522-amino-acid chain; its full sequence is Peptide chain release factor 3 (522 aa).

In terms of domain architecture, tr-type G spans 10–277; sequence ASRKTFAIIS…TFVDFAPSPS (268 aa). Residues 19–26, 87–91, and 141–144 each bind GTP; these read SHPDAGKT, DTPGH, and NKMD.

The protein belongs to the TRAFAC class translation factor GTPase superfamily. Classic translation factor GTPase family. PrfC subfamily.

The protein localises to the cytoplasm. Functionally, increases the formation of ribosomal termination complexes and stimulates activities of RF-1 and RF-2. It binds guanine nucleotides and has strong preference for UGA stop codons. It may interact directly with the ribosome. The stimulation of RF-1 and RF-2 is significantly reduced by GTP and GDP, but not by GMP. The protein is Peptide chain release factor 3 of Listeria monocytogenes serotype 4b (strain F2365).